Consider the following 358-residue polypeptide: Alanine racemase, biosynthetic (358 aa).

The Proton acceptor; specific for D-alanine role is filled by Lys34. Residue Lys34 is modified to N6-(pyridoxal phosphate)lysine. Arg130 is a binding site for substrate. Catalysis depends on Tyr254, which acts as the Proton acceptor; specific for L-alanine. Met302 serves as a coordination point for substrate.

Belongs to the alanine racemase family. The cofactor is pyridoxal 5'-phosphate.

It carries out the reaction L-alanine = D-alanine. The protein operates within amino-acid biosynthesis; D-alanine biosynthesis; D-alanine from L-alanine: step 1/1. It participates in cell wall biogenesis; peptidoglycan biosynthesis. Its function is as follows. Catalyzes the interconversion of L-alanine and D-alanine. Provides the D-alanine required for cell wall biosynthesis. The chain is Alanine racemase, biosynthetic (alr) from Pseudomonas aeruginosa (strain ATCC 15692 / DSM 22644 / CIP 104116 / JCM 14847 / LMG 12228 / 1C / PRS 101 / PAO1).